The following is a 358-amino-acid chain: METLCHRLNVCQEKILDCYELDSDKLVDQINYWTLLRYEAAMFYAARERNLRTINHQVVPATTVSKQKACQAIEMHMALQSLNKSDYNMEPWTMRETCYELWCVAPKQCFKKGGITVTVIFDGNKDNAMDYTSWKFIYIYDNDKWVKTNGNVDYTGIYYTVNSKKEYYVQFKDEAKIYGAQQWEVYMYGTVITCPEYVSSTCSDALSTTTTVEQLSNTPTTNPLTTCVGAKEAQTQQRKRQRLTEPDSSTISPLSVDNTNNQIHCGSGSTNTGGHQSATQTAFIVHLKGDTNCLKCFRYRFTKHKGLYKNVSSTWHWTSNTKTGIVTIVFDSAHQRETFIKTIKVPPSVTLSLGIMTL.

Residues 1-199 form a transactivation domain region; the sequence is METLCHRLNV…TVITCPEYVS (199 aa). The segment at 224 to 255 is disordered; sequence LTTCVGAKEAQTQQRKRQRLTEPDSSTISPLS. Over residues 246–255 the composition is skewed to polar residues; that stretch reads PDSSTISPLS. Residues 281 to 358 form a DNA-binding domain region; the sequence is TAFIVHLKGD…VTLSLGIMTL (78 aa). Lys-288 participates in a covalent cross-link: Glycyl lysine isopeptide (Lys-Gly) (interchain with G-Cter in SUMO).

This sequence belongs to the papillomaviridae E2 protein family. As to quaternary structure, binds DNA as homodimer. Interacts with protein E1; this interaction greatly increases E1 DNA-binding activity. Interacts with protein L1; this interaction enhances E2-dependent replication and transcription activation. Interacts with protein L2; this interaction inhibits E2 transcriptional activity but not DNA replication function E2. Interacts with protein E7; this interaction inhibits E7 oncogenic activity. Interacts with host TAF1; this interaction modulates E2-dependent transcriptional regulation. Interacts with host BRD4; this interaction mediates E2 transcriptional activation function. Additionally, the interaction with host BRD4 on mitotic chromosomes mediates tethering of the viral genome. Interacts with host TOPBP1; this interaction is required for optimal viral DNA replication. Phosphorylated. In terms of processing, sumoylation plays a regulatory role in E2 transcriptional activity.

Its subcellular location is the host nucleus. Its function is as follows. Plays a role in the initiation of viral DNA replication. A dimer of E2 interacts with a dimer of E1 in order to improve specificity of E1 DNA binding activity. Once the complex recognizes and binds DNA at specific sites, the E2 dimer is removed from DNA. E2 also regulates viral transcription through binding to the E2RE response element (5'-ACCNNNNNNGGT-3') present in multiple copies in the regulatory regions of the viral genome. Activates or represses transcription depending on E2RE's position with regards to proximal promoter elements including the TATA-box. Repression occurs by sterically hindering the assembly of the transcription initiation complex. This chain is Regulatory protein E2, found in Human papillomavirus 51.